The primary structure comprises 957 residues: Protein CRT10 (957 aa).

Positions asparagine 695 to glutamine 719 are disordered. The segment covering threonine 697–glutamate 710 has biased composition (acidic residues). The residue at position 704 (serine 704) is a Phosphoserine.

As to quaternary structure, component of a cullin-RING ligase (CRL) composed of 4 subunits: the RING protein HRT1, the cullin RTT101, a linker protein MMS1, and the substrate receptor CRT10. Interacts with MMS1.

Its function is as follows. Substrate targeting component of a cullin-RING-based E3 ubiquitin-protein ligase complex RTT101(MMS1-CRT10). RTT101(MMS1-CRT10) may regulate nucleotide synthesis through transcriptional regulation of RNR genes encoding ribonucleotide reductases. This is Protein CRT10 (CRT10) from Saccharomyces cerevisiae (strain ATCC 204508 / S288c) (Baker's yeast).